Reading from the N-terminus, the 249-residue chain is Small ribosomal subunit protein uS2 (249 aa).

The protein belongs to the universal ribosomal protein uS2 family.

The chain is Small ribosomal subunit protein uS2 from Polynucleobacter necessarius subsp. necessarius (strain STIR1).